The chain runs to 428 residues: Adenylosuccinate synthetase (428 aa).

Residues 12–18 (GDEGKGK) and 40–42 (GHT) each bind GTP. Asp13 functions as the Proton acceptor in the catalytic mechanism. 2 residues coordinate Mg(2+): Asp13 and Gly40. IMP is bound by residues 13–16 (DEGK), 38–41 (NAGH), Thr130, Arg144, Gln225, Thr240, and Arg304. The Proton donor role is filled by His41. Residue 300–306 (ATTGRPR) participates in substrate binding. Residues Arg306, 332–334 (KLD), and 415–417 (SVG) each bind GTP.

This sequence belongs to the adenylosuccinate synthetase family. As to quaternary structure, homodimer. Mg(2+) serves as cofactor.

The protein resides in the cytoplasm. The enzyme catalyses IMP + L-aspartate + GTP = N(6)-(1,2-dicarboxyethyl)-AMP + GDP + phosphate + 2 H(+). It functions in the pathway purine metabolism; AMP biosynthesis via de novo pathway; AMP from IMP: step 1/2. Its function is as follows. Plays an important role in the de novo pathway of purine nucleotide biosynthesis. Catalyzes the first committed step in the biosynthesis of AMP from IMP. In Lawsonia intracellularis (strain PHE/MN1-00), this protein is Adenylosuccinate synthetase.